We begin with the raw amino-acid sequence, 206 residues long: MARYLGPKLKLSRREGTDLFLKSGVRAIDSKCKIDTAPGQHGARKPRLSDYGSQLREKQKVRRIYGILERQFRNYYKEANRLKGNTGENLLVLLEGRLDNVVYRMGFAATRAEARQLVSHKAIVVNGRVVNIPSFQVSVDDVVAVREKSKKQARIKASLELAEQREKPTWLEVDAAKMEGVFKRVPERSDLSADINEHLIVELYSK.

Residues 96–156 (GRLDNVVYRM…EKSKKQARIK (61 aa)) form the S4 RNA-binding domain.

The protein belongs to the universal ribosomal protein uS4 family. As to quaternary structure, part of the 30S ribosomal subunit. Contacts protein S5. The interaction surface between S4 and S5 is involved in control of translational fidelity.

One of the primary rRNA binding proteins, it binds directly to 16S rRNA where it nucleates assembly of the body of the 30S subunit. Its function is as follows. With S5 and S12 plays an important role in translational accuracy. The chain is Small ribosomal subunit protein uS4 from Mannheimia succiniciproducens (strain KCTC 0769BP / MBEL55E).